A 291-amino-acid polypeptide reads, in one-letter code: Filament protein FIN1 (291 aa).

Ser-54 bears the Phosphoserine mark. Position 68 is a phosphothreonine (Thr-68). Phosphoserine occurs at positions 74 and 88. Residues 254–284 (VELKEIKDLLLQMLRRQREIESRLSNIELQL) adopt a coiled-coil conformation.

Homooligomer; in vitro, FIN1 self-assembles into 10 nm diameter filaments. Interacts with the 14-3-3 proteins BMH1 and BMH2, and the protein phosphatase 1 complex catalytic subunit GLC7. Post-translationally, phosphorylated by CDC28. Phosphorylation is required for BMH1 and BMH2 interaction. Dephosphorylation by GLC7 depends on the presence of BMH1 and BMH2.

The protein localises to the nucleus. It is found in the cytoplasm. Its subcellular location is the cytoskeleton. It localises to the spindle pole. Forms cell-cycle specific filaments between the spindle pole bodies of dividing yeast cells. The protein is Filament protein FIN1 (FIN1) of Saccharomyces cerevisiae (strain ATCC 204508 / S288c) (Baker's yeast).